Consider the following 294-residue polypeptide: Homeobox-leucine zipper protein ATHB-16 (294 aa).

Polar residues predominate over residues 1-20 (MKRLSSSDSMCGLISTSTDE). Positions 1–31 (MKRLSSSDSMCGLISTSTDEQSPRGYGSNYQ) are disordered. The homeobox DNA-binding region spans 56-115 (LSEKKRRLKVDQVKALEKNFELENKLEPERKTKLAQELGLQPRQVAVWFQNRRARWKTKQ). Positions 116–151 (LEKDYGVLKGQYDSLRHNFDSLRRDNDSLLQEISKI) are leucine-zipper. Polar residues predominate over residues 219 to 238 (SSDSCDSSAVLNDETSSDNG). The tract at residues 219–241 (SSDSCDSSAVLNDETSSDNGRLT) is disordered.

It belongs to the HD-ZIP homeobox family. Class I subfamily. Widely expressed with a lower level in siliques.

It localises to the nucleus. In terms of biological role, probable transcription factor that may function as a negative regulator of the flowering time response to photoperiod. May act to repress cell expansion during plant development. The polypeptide is Homeobox-leucine zipper protein ATHB-16 (ATHB-16) (Arabidopsis thaliana (Mouse-ear cress)).